A 328-amino-acid chain; its full sequence is G2/mitotic-specific cyclin-2 (328 aa).

This sequence belongs to the cyclin family. Cyclin AB subfamily. In terms of assembly, interacts with the CDC2 protein kinase to form a serine/threonine kinase holoenzyme complex also known as maturation promoting factor (MPF). The cyclin subunit imparts substrate specificity to the complex. As to expression, only expressed in organs with dividing cells.

Functionally, essential for the control of the cell cycle at the G2/M (mitosis) transition. This Medicago sativa (Alfalfa) protein is G2/mitotic-specific cyclin-2.